We begin with the raw amino-acid sequence, 118 residues long: Large ribosomal subunit protein uL24 (118 aa).

It belongs to the universal ribosomal protein uL24 family. As to quaternary structure, part of the 50S ribosomal subunit.

One of two assembly initiator proteins, it binds directly to the 5'-end of the 23S rRNA, where it nucleates assembly of the 50S subunit. Its function is as follows. One of the proteins that surrounds the polypeptide exit tunnel on the outside of the subunit. This chain is Large ribosomal subunit protein uL24, found in Synechococcus sp. (strain CC9902).